Reading from the N-terminus, the 639-residue chain is tRNA uridine 5-carboxymethylaminomethyl modification enzyme MnmG (639 aa).

G15–G20 provides a ligand contact to FAD. An NAD(+)-binding site is contributed by G276 to F290.

This sequence belongs to the MnmG family. As to quaternary structure, homodimer. Heterotetramer of two MnmE and two MnmG subunits. The cofactor is FAD.

The protein resides in the cytoplasm. NAD-binding protein involved in the addition of a carboxymethylaminomethyl (cmnm) group at the wobble position (U34) of certain tRNAs, forming tRNA-cmnm(5)s(2)U34. This Streptococcus gordonii (strain Challis / ATCC 35105 / BCRC 15272 / CH1 / DL1 / V288) protein is tRNA uridine 5-carboxymethylaminomethyl modification enzyme MnmG.